We begin with the raw amino-acid sequence, 104 residues long: DNA-directed RNA polymerase subunit omega (104 aa).

This sequence belongs to the RNA polymerase subunit omega family. The RNAP catalytic core consists of 2 alpha, 1 beta, 1 beta' and 1 omega subunit. When a sigma factor is associated with the core the holoenzyme is formed, which can initiate transcription.

The enzyme catalyses RNA(n) + a ribonucleoside 5'-triphosphate = RNA(n+1) + diphosphate. Promotes RNA polymerase assembly. Latches the N- and C-terminal regions of the beta' subunit thereby facilitating its interaction with the beta and alpha subunits. The sequence is that of DNA-directed RNA polymerase subunit omega (rpoZ) from Streptococcus pyogenes serotype M1.